A 183-amino-acid chain; its full sequence is Phospholipase A2 inhibitor gamma subunit A1 (183 aa).

Cystine bridges form between Cys3/Cys28, Cys6/Cys13, Cys21/Cys49, Cys55/Cys76, Cys77/Cys82, Cys100/Cys125, Cys118/Cys147, and Cys151/Cys173. A glycan (N-linked (GlcNAc...) asparagine) is linked at Asn158.

This sequence belongs to the CNF-like-inhibitor family. Heterodimer of subunit A and subunit B. Expressed by the liver.

Its subcellular location is the secreted. Phospholipase A2 (PA2) inhibitor. Inhibits the enzymatic activity of PA2 of Deinagkistrodon acutus. Also shows a wide anti-hemorrhage activities to D.acutus, Naja atra and Agkistrodon halys venom. The native protein is more potent than the recombinant one. The chain is Phospholipase A2 inhibitor gamma subunit A1 from Trimerodytes annularis (Red-bellied annulate keelback).